We begin with the raw amino-acid sequence, 100 residues long: Vesicle-associated membrane protein 3 (100 aa).

The residue at position 2 (Ser-2) is an N-acetylserine. The Cytoplasmic portion of the chain corresponds to 2–77; it reads STGPTAATGS…KRKYWWKNCK (76 aa). Residues 14–74 form the v-SNARE coiled-coil homology domain; it reads RLQQTQNQVD…AKLKRKYWWK (61 aa). Glycyl lysine isopeptide (Lys-Gly) (interchain with G-Cter in ubiquitin) cross-links involve residues Lys-66, Lys-68, and Lys-77. Residues 78-98 form a helical; Anchor for type IV membrane protein membrane-spanning segment; the sequence is MWAIGITVLVIFIIIIIVWVV. Residues 99-100 lie on the Vesicular side of the membrane; that stretch reads SS.

It belongs to the synaptobrevin family. In terms of assembly, interacts with POPDC1 (via the C-terminus cytoplasmic tail). Interacts with BCAP31; involved in VAMP3 export from the endoplasmic reticulum. Interacts with BAIAP3; this interaction is increased in the presence of calcium. Interacts with PICALM. In terms of processing, ubiquitinated by RNF167 at Lys-66, Lys-68 and Lys-77, regulating the recycling endosome pathway. (Microbial infection) Targeted and hydrolyzed by C.botulinum neurotoxin type B (BoNT/B, botB) which hydrolyzes the 59-Gln-|-Phe-60 bond and probably inhibits neurotransmitter release. Post-translationally, (Microbial infection) Targeted and hydrolyzed by C.botulinum neurotoxin type D (BoNT/D, botD) which hydrolyzes the 42-Lys-|-Leu-43 bond and probably inhibits neurotransmitter release. Note that humans are not known to be infected by C.botulinum type D. In terms of processing, (Microbial infection) Targeted and hydrolyzed by C.botulinum neurotoxin type F (BoNT/F, botF) which hydrolyzes the 41-Gln-|-Lys-42 bond and probably inhibits neurotransmitter release.

The protein resides in the early endosome membrane. Its subcellular location is the recycling endosome membrane. The protein localises to the synapse. It localises to the synaptosome. Its function is as follows. SNARE involved in vesicular transport from the late endosomes to the trans-Golgi network. This chain is Vesicle-associated membrane protein 3 (VAMP3), found in Homo sapiens (Human).